Consider the following 57-residue polypeptide: UPF0391 membrane protein bsl6560 (57 aa).

A run of 2 helical transmembrane segments spans residues 4–24 and 30–50; these read WVVTFLVIALIAGILGFGGIA and IAKIIFFIAVVLFLVSAVVGL.

The protein belongs to the UPF0391 family.

The protein resides in the cell membrane. This is UPF0391 membrane protein bsl6560 from Bradyrhizobium diazoefficiens (strain JCM 10833 / BCRC 13528 / IAM 13628 / NBRC 14792 / USDA 110).